We begin with the raw amino-acid sequence, 315 residues long: MTLDQLRIASRRSQLAMVQTNWVRDELQREHPDLVITIEAMATQGDKILDVALAKIGDKGLFTKELEAQMLLGHAEIAVHSLKDLPTNLPDGLILGCITKREDPSDALVVNEKNQIHKLETLPEGSVVGTSSLRRLAQLRYHYPHLVFKDVRGNVITRLEKLDSGEYDCLILAAAGLQRLGFANRIHQLIPTDISLHAVGQGALGIECVSGQQKVLDILKTLEHESTSKRCLAERSFLRELEGGCQVPIGVRTEINNNELILEGMVASLDGKRLIRDIKKGSVSSAEEIGIDLANELKGRGAGEILEEIFKSARA.

Residue C245 is modified to S-(dipyrrolylmethanemethyl)cysteine.

It belongs to the HMBS family. As to quaternary structure, monomer. Requires dipyrromethane as cofactor.

The enzyme catalyses 4 porphobilinogen + H2O = hydroxymethylbilane + 4 NH4(+). Its pathway is porphyrin-containing compound metabolism; protoporphyrin-IX biosynthesis; coproporphyrinogen-III from 5-aminolevulinate: step 2/4. It functions in the pathway porphyrin-containing compound metabolism; chlorophyll biosynthesis. Tetrapolymerization of the monopyrrole PBG into the hydroxymethylbilane pre-uroporphyrinogen in several discrete steps. The protein is Porphobilinogen deaminase of Prochlorococcus marinus (strain NATL2A).